The primary structure comprises 650 residues: Protein kinase domain-containing protein ppk38 (650 aa).

The Protein kinase domain maps to 33–315 (VTVKRYLAEG…MRNVPIHIYD (283 aa)). Disordered stretches follow at residues 344 to 442 (IHQS…PTTP), 517 to 571 (KVAA…PTNM), and 591 to 616 (RRVS…EKPM). 2 stretches are compositionally biased toward polar residues: residues 369–415 (NVNS…NFRV) and 533–554 (SVEN…SSNA).

This Schizosaccharomyces pombe (strain 972 / ATCC 24843) (Fission yeast) protein is Protein kinase domain-containing protein ppk38 (ppk38).